Here is a 294-residue protein sequence, read N- to C-terminus: Bifunctional protein FolD (294 aa).

Residues 176–178 (GAS), Ser201, and Ile242 each bind NADP(+).

Belongs to the tetrahydrofolate dehydrogenase/cyclohydrolase family. In terms of assembly, homodimer.

The enzyme catalyses (6R)-5,10-methylene-5,6,7,8-tetrahydrofolate + NADP(+) = (6R)-5,10-methenyltetrahydrofolate + NADPH. It carries out the reaction (6R)-5,10-methenyltetrahydrofolate + H2O = (6R)-10-formyltetrahydrofolate + H(+). It participates in one-carbon metabolism; tetrahydrofolate interconversion. Its function is as follows. Catalyzes the oxidation of 5,10-methylenetetrahydrofolate to 5,10-methenyltetrahydrofolate and then the hydrolysis of 5,10-methenyltetrahydrofolate to 10-formyltetrahydrofolate. This Bordetella petrii (strain ATCC BAA-461 / DSM 12804 / CCUG 43448) protein is Bifunctional protein FolD.